Here is a 190-residue protein sequence, read N- to C-terminus: Ribosome maturation factor RimM (190 aa).

Residues 95–177 (EDDEFFYTDL…AGLIDSPDDL (83 aa)) enclose the PRC barrel domain. Positions 170–190 (LIDSPDDLTGKPPKPPGKTKE) are disordered. The segment covering 181–190 (PPKPPGKTKE) has biased composition (pro residues).

Belongs to the RimM family. In terms of assembly, binds ribosomal protein uS19.

Its subcellular location is the cytoplasm. Its function is as follows. An accessory protein needed during the final step in the assembly of 30S ribosomal subunit, possibly for assembly of the head region. Essential for efficient processing of 16S rRNA. May be needed both before and after RbfA during the maturation of 16S rRNA. It has affinity for free ribosomal 30S subunits but not for 70S ribosomes. This is Ribosome maturation factor RimM from Rhizobium rhizogenes (strain K84 / ATCC BAA-868) (Agrobacterium radiobacter).